The primary structure comprises 1178 residues: Zinc finger CCHC domain-containing protein 2 (1178 aa).

Disordered stretches follow at residues 1 to 90 (MLRM…GPSA), 207 to 249 (AARG…RVGG), 557 to 683 (VTSA…SVNQ), and 936 to 986 (LSTA…SDST). The segment covering 43–67 (PPPPPPPPAGPSRGPLPPPPPPRGL) has biased composition (pro residues). Gly residues predominate over residues 75–88 (AAAGAGMPGGGGGP). Basic and acidic residues predominate over residues 208 to 219 (ARGEGSRGGAED). Residues 220–229 (ERGEDGDGEQ) are compositionally biased toward acidic residues. Serine 236 is modified (phosphoserine). Residues 580–594 (PQTEKEKIKKTDNRL) are compositionally biased toward basic and acidic residues. The segment covering 595-607 (NSRINGIRLSTPQ) has biased composition (polar residues). The segment covering 632–641 (SSESYSSPSS) has biased composition (low complexity). Positions 642–661 (PRHDGRESFESEEEKDRDTD) are enriched in basic and acidic residues. Polar residues predominate over residues 665 to 683 (EDSGNPSTTRFTGYGSVNQ). Residues 937–948 (STAATSPQPASA) show a composition bias toward low complexity. Over residues 959–973 (PAVPTHTPGPAPSPS) the composition is skewed to pro residues. The segment covering 974–986 (PALTHSTAQSDST) has biased composition (polar residues). The CCHC-type zinc-finger motif lies at 1131 to 1148 (VSCYNCGVSGHYAQDCKQ).

In Homo sapiens (Human), this protein is Zinc finger CCHC domain-containing protein 2.